The sequence spans 156 residues: MDTLHEHEAGNLYEEQRVDRVGDALTADAGDDADTLEDGQQQQQQQHQQLLGVNRQMAILLDAPQEPPMAVFPARGGLNGPPRLRKKRSFYTMVKPSPPCESQEPEMCLLLASVTRAMRQVREDQRGEYFANYLVENMTSQNYPNGVGLPQHWGEF.

Residues 26 to 48 form a disordered region; that stretch reads TADAGDDADTLEDGQQQQQQQHQ. A glycan (N-linked (GlcNAc...) asparagine) is linked at asparagine 137.

This sequence belongs to the male-specific scotti family.

Post-meiotically transcribed gene that has a role in late spermiogenesis; required for actin cone progression during spermatid individualization. This is Male-specific protein scotti from Drosophila erecta (Fruit fly).